The following is a 162-amino-acid chain: Putative colanic acid biosynthesis acetyltransferase WcaB (162 aa).

The protein belongs to the transferase hexapeptide repeat family.

Its pathway is slime biogenesis; slime polysaccharide biosynthesis. The chain is Putative colanic acid biosynthesis acetyltransferase WcaB (wcaB) from Escherichia coli O157:H7.